The primary structure comprises 335 residues: Protein-arginine kinase (335 aa).

In terms of domain architecture, Phosphagen kinase C-terminal spans 21 to 244 (VIISSRIRLA…NQIINEEKQI (224 aa)). Residues 24–28 (SSRIR), His82, Arg115, 166–170 (RASVM), and 197–202 (RGIYGE) contribute to the ATP site.

This sequence belongs to the ATP:guanido phosphotransferase family.

It carries out the reaction L-arginyl-[protein] + ATP = N(omega)-phospho-L-arginyl-[protein] + ADP + H(+). In terms of biological role, catalyzes the specific phosphorylation of arginine residues in proteins. This is Protein-arginine kinase from Staphylococcus epidermidis (strain ATCC 12228 / FDA PCI 1200).